A 166-amino-acid polypeptide reads, in one-letter code: Protein adg1 (166 aa).

An N-terminal signal peptide occupies residues 1–22 (MFLRSIFQTLCAVSFLAGSVFA).

Its subcellular location is the endoplasmic reticulum. This chain is Protein adg1 (adg1), found in Schizosaccharomyces pombe (strain 972 / ATCC 24843) (Fission yeast).